The primary structure comprises 389 residues: NAD-dependent protein deacetylase sirtuin-2 (389 aa).

The segment at 1-34 (MAEPDPSDPLETQAGKVQEAQDSDSDTEGGATGG) is disordered. Residue A2 is modified to N-acetylalanine. 2 positions are modified to phosphoserine: S23 and S25. The residue at position 27 (T27) is a Phosphothreonine. The Nuclear export signal motif lies at 41–51 (LRNLFTQTLGL). S53 is subject to Phosphoserine. Residues 57-338 (RLLDELTLEG…LALADLLGWK (282 aa)) enclose the Deacetylase sirtuin-type domain. NAD(+) is bound by residues 85–89 (AGIST) and 95–97 (DFR). At S100 the chain carries Phosphoserine. An NAD(+)-binding site is contributed by 167–170 (QNID). The active-site Proton acceptor is H187. C195, C200, C221, and C224 together coordinate Zn(2+). NAD(+)-binding positions include 262-263 (TS), 286-288 (NKE), and C324. The tract at residues 350–389 (ANIDAQSGSQAPNPSTTISPGKSPPPAKEAARTKEKEEQQ) is disordered. The segment covering 353–369 (DAQSGSQAPNPSTTISP) has biased composition (polar residues). 2 positions are modified to phosphoserine: S368 and S372. Residues 378–389 (EAARTKEKEEQQ) show a composition bias toward basic and acidic residues.

This sequence belongs to the sirtuin family. Class I subfamily. Interacts with CDC20, FOXO3 and FZR1. Associates with microtubule in primary cortical mature neurons. Homotrimer. Interacts (via both phosphorylated, unphosphorylated, active or inactive forms) with HDAC6; the interaction is necessary for the complex to interact with alpha-tubulin, suggesting that these proteins belong to a large complex that deacetylates the cytoskeleton. Interacts with FOXO1; the interaction is disrupted upon serum-starvation or oxidative stress, leading to increased level of acetylated FOXO1 and induction of autophagy. Interacts with RELA; the interaction occurs in the cytoplasm and is increased in a TNF-alpha-dependent manner. Interacts with HOXA10; the interaction is direct. Interacts with YWHAB and YWHAG; the interactions occur in a AKT-dependent manner and increase SIRT2-dependent TP53 deacetylation. Interacts with MAPK1/ERK2 and MAPK3/ERK1; the interactions increase SIRT2 stability and deacetylation activity. Interacts (phosphorylated form) with KMT5A isoform 2; the interaction is direct, stimulates KMT5A-mediated methyltransferase activity on histone at 'Lys-20' (H4K20me1) and is increased in a H(2)O(2)-induced oxidative stress-dependent manner. Interacts with G6PD; the interaction is enhanced by H(2)O(2) treatment. Interacts with a G1/S-specific cyclin E-CDK2 complex. Interacts with AURKA, CDK5R1 (p35 form) and CDK5 and HIF1A. Interacts with the tRNA ligase SARS1; recruited to the VEGFA promoter via interaction with SARS1. Isoform 2 and isoform 4 associate with microtubules in primary cortical mature neurons. Interacts with BEX4; negatively regulates alpha-tubulin deacetylation by SIRT2. Requires Zn(2+) as cofactor. Phosphorylated at phosphoserine and phosphothreonine. Phosphorylated at Ser-368 by a mitotic kinase CDK1/cyclin B at the G2/M transition; phosphorylation regulates the delay in cell-cycle progression. Phosphorylated at Ser-368 by a mitotic kinase G1/S-specific cyclin E/Cdk2 complex; phosphorylation inactivates SIRT2-mediated alpha-tubulin deacetylation and thereby negatively regulates cell adhesion, cell migration and neurite outgrowth during neuronal differentiation. Phosphorylated by cyclin A/Cdk2 and p35-Cdk5 complexes and to a lesser extent by the cyclin D3/Cdk4 and cyclin B/Cdk1, in vitro. Dephosphorylated at Ser-368 by CDC14A and CDC14B around early anaphase. In terms of processing, acetylated by EP300; acetylation leads both to the decreased of SIRT2-mediated alpha-tubulin deacetylase activity and SIRT2-mediated down-regulation of TP53 transcriptional activity. Post-translationally, ubiquitinated. As to expression, isoform 1 is weakly expressed in the cortex at postnatal(P) days P1, P3 and P7, and increases progressively between P17 and older adult cortex. Isoform 1 is also expressed in heart, liver and skeletal muscle, weakly expressed in the striatum and spinal cord. Isoform 2 is not expressed in the cortex at P1, P3 and P7, and increases strongly and progressively between P17 and older adult cortex. Isoform 2 is also expressed in the heart, liver, striatum and spinal cord. Isoform 4 is weakly expressed in older adult cortex and spinal cords. Expressed in the cortex. Expressed in postnatal sciatic nerves during myelination and during remyelination after nerve injury. Expressed in neurons, oligodendrocytes, Schwann cells, Purkinje cells and in astrocytes of white matter. Strongly expressed in preadipocytes compared with differentiated adipocytes. Expressed in cerebellar granule cells. Expressed in the inner ear: in the cochlea, expressed in types I and V fibrocytes in the spiral ligament (SL) and slightly in stria vascularis (SV); in the organ of Corti, expressed in some supporting cells; in the crista ampullaris, expressed in spiral ganglion cells; also expressed in the endolymphatic sac (ES) epithelial cells (at protein level). Expressed in the brain, spinal cord, optic nerve and hippocampus. Strongly expressed in 6-8 week-old ovulated meiosis II oocytes and weakly expressed in 45-58 week-old ovulated meiosis II oocytes. Expressed in the cochlea, vestibule and acoustic nerve of the inner ear.

Its subcellular location is the nucleus. The protein localises to the cytoplasm. The protein resides in the perinuclear region. It localises to the perikaryon. It is found in the cytoskeleton. Its subcellular location is the cell projection. The protein localises to the growth cone. The protein resides in the myelin membrane. It localises to the microtubule organizing center. It is found in the centrosome. Its subcellular location is the spindle. The protein localises to the chromosome. The protein resides in the midbody. It localises to the centriole. The enzyme catalyses N(6)-acetyl-L-lysyl-[protein] + NAD(+) + H2O = 2''-O-acetyl-ADP-D-ribose + nicotinamide + L-lysyl-[protein]. The catalysed reaction is N(6)-tetradecanoyl-L-lysyl-[protein] + NAD(+) + H2O = 2''-O-tetradecanoyl-ADP-D-ribose + nicotinamide + L-lysyl-[protein]. It carries out the reaction N(6)-hexadecanoyl-L-lysyl-[protein] + NAD(+) + H2O = 2''-O-hexadecanoyl-ADP-D-ribose + nicotinamide + L-lysyl-[protein]. Inhibited by Sirtinol, A3 and M15 small molecules. Inhibited by nicotinamide. Inhibited by a macrocyclic peptide inhibitor S2iL5. Inhibited by EP300-induced acetylation. NAD-dependent protein deacetylase, which deacetylates internal lysines on histone and alpha-tubulin as well as many other proteins such as key transcription factors. Participates in the modulation of multiple and diverse biological processes such as cell cycle control, genomic integrity, microtubule dynamics, cell differentiation, metabolic networks, and autophagy. Plays a major role in the control of cell cycle progression and genomic stability. Functions in the antephase checkpoint preventing precocious mitotic entry in response to microtubule stress agents, and hence allowing proper inheritance of chromosomes. Positively regulates the anaphase promoting complex/cyclosome (APC/C) ubiquitin ligase complex activity by deacetylating CDC20 and FZR1, then allowing progression through mitosis. Associates both with chromatin at transcriptional start sites (TSSs) and enhancers of active genes. Plays a role in cell cycle and chromatin compaction through epigenetic modulation of the regulation of histone H4 'Lys-20' methylation (H4K20me1) during early mitosis. Specifically deacetylates histone H4 at 'Lys-16' (H4K16ac) between the G2/M transition and metaphase enabling H4K20me1 deposition by KMT5A leading to ulterior levels of H4K20me2 and H4K20me3 deposition throughout cell cycle, and mitotic S-phase progression. Deacetylates KMT5A modulating KMT5A chromatin localization during the mitotic stress response. Also deacetylates histone H3 at 'Lys-57' (H3K56ac) during the mitotic G2/M transition. During oocyte meiosis progression, may deacetylate histone H4 at 'Lys-16' (H4K16ac) and alpha-tubulin, regulating spindle assembly and chromosome alignment by influencing microtubule dynamics and kinetochore function. Deacetylates histone H4 at 'Lys-16' (H4K16ac) at the VEGFA promoter and thereby contributes to regulate expression of VEGFA, a key regulator of angiogenesis. Deacetylates alpha-tubulin at 'Lys-40' and hence controls neuronal motility, oligodendroglial cell arbor projection processes and proliferation of non-neuronal cells. Phosphorylation at Ser-368 by a G1/S-specific cyclin E-CDK2 complex inactivates SIRT2-mediated alpha-tubulin deacetylation, negatively regulating cell adhesion, cell migration and neurite outgrowth during neuronal differentiation. Deacetylates PARD3 and participates in the regulation of Schwann cell peripheral myelination formation during early postnatal development and during postinjury remyelination. Involved in several cellular metabolic pathways. Plays a role in the regulation of blood glucose homeostasis by deacetylating and stabilizing phosphoenolpyruvate carboxykinase PCK1 activity in response to low nutrient availability. Acts as a key regulator in the pentose phosphate pathway (PPP) by deacetylating and activating the glucose-6-phosphate G6PD enzyme, and therefore, stimulates the production of cytosolic NADPH to counteract oxidative damage. Maintains energy homeostasis in response to nutrient deprivation as well as energy expenditure by inhibiting adipogenesis and promoting lipolysis. Attenuates adipocyte differentiation by deacetylating and promoting FOXO1 interaction to PPARG and subsequent repression of PPARG-dependent transcriptional activity. Plays a role in the regulation of lysosome-mediated degradation of protein aggregates by autophagy in neuronal cells. Deacetylates FOXO1 in response to oxidative stress or serum deprivation, thereby negatively regulating FOXO1-mediated autophagy. Deacetylates a broad range of transcription factors and co-regulators regulating target gene expression. Deacetylates transcriptional factor FOXO3 stimulating the ubiquitin ligase SCF(SKP2)-mediated FOXO3 ubiquitination and degradation. Deacetylates HIF1A and therefore promotes HIF1A degradation and inhibition of HIF1A transcriptional activity in tumor cells in response to hypoxia. Deacetylates RELA in the cytoplasm inhibiting NF-kappaB-dependent transcription activation upon TNF-alpha stimulation. Inhibits transcriptional activation by deacetylating p53/TP53 and EP300. Also deacetylates EIF5A. Functions as a negative regulator on oxidative stress-tolerance in response to anoxia-reoxygenation conditions. Plays a role as tumor suppressor. In addition to protein deacetylase activity, also has activity toward long-chain fatty acyl groups and mediates protein-lysine demyristoylation and depalmitoylation of target proteins, such as ARF6 and KRAS, thereby regulating their association with membranes. In terms of biological role, deacetylates alpha-tubulin. This chain is NAD-dependent protein deacetylase sirtuin-2 (Sirt2), found in Mus musculus (Mouse).